An 80-amino-acid chain; its full sequence is Conotoxin Cl9.5 (80 aa).

Positions 1–23 (MNCYLILTVALLLTSAMTGTTTA) are cleaved as a signal peptide. Positions 24 to 37 (GQLNTKGVTLREDD) are excised as a propeptide. Intrachain disulfides connect cysteine 42/cysteine 59, cysteine 47/cysteine 69, and cysteine 49/cysteine 74.

As to expression, expressed by the venom duct.

It localises to the secreted. The sequence is that of Conotoxin Cl9.5 from Californiconus californicus (California cone).